A 201-amino-acid chain; its full sequence is ATP-dependent Clp protease proteolytic subunit (201 aa).

Serine 101 functions as the Nucleophile in the catalytic mechanism. Histidine 126 is an active-site residue.

It belongs to the peptidase S14 family. Component of the chloroplastic Clp protease core complex.

Its subcellular location is the plastid. It localises to the chloroplast stroma. It carries out the reaction Hydrolysis of proteins to small peptides in the presence of ATP and magnesium. alpha-casein is the usual test substrate. In the absence of ATP, only oligopeptides shorter than five residues are hydrolyzed (such as succinyl-Leu-Tyr-|-NHMec, and Leu-Tyr-Leu-|-Tyr-Trp, in which cleavage of the -Tyr-|-Leu- and -Tyr-|-Trp bonds also occurs).. Its function is as follows. Cleaves peptides in various proteins in a process that requires ATP hydrolysis. Has a chymotrypsin-like activity. Plays a major role in the degradation of misfolded proteins. The protein is ATP-dependent Clp protease proteolytic subunit of Chlorella vulgaris (Green alga).